The sequence spans 77 residues: U11-lycotoxin-Ls1d (77 aa).

The N-terminal stretch at 1-20 (MKLIIFTGLVLFAIVSLIEA) is a signal peptide. Positions 21–26 (EEESGR) are excised as a propeptide.

This sequence belongs to the neurotoxin 19 (CSTX) family. 10 (U11-Lctx) subfamily. Post-translationally, contains 4 disulfide bonds. In terms of tissue distribution, expressed by the venom gland.

The protein resides in the secreted. This is U11-lycotoxin-Ls1d from Lycosa singoriensis (Wolf spider).